The primary structure comprises 160 residues: Transcriptional repressor NrdR (160 aa).

Residues 1 to 11 (MRCPSCNSLDT) show a composition bias toward polar residues. The tract at residues 1–20 (MRCPSCNSLDTQVKDSRPTE) is disordered. A zinc finger spans residues 3–34 (CPSCNSLDTQVKDSRPTEDSAVIRRRRVCMAC). The region spanning 49 to 139 (LTVIKRNGRR…VYRNFREAKD (91 aa)) is the ATP-cone domain.

The protein belongs to the NrdR family. Zn(2+) serves as cofactor.

In terms of biological role, negatively regulates transcription of bacterial ribonucleotide reductase nrd genes and operons by binding to NrdR-boxes. The protein is Transcriptional repressor NrdR of Nitrobacter winogradskyi (strain ATCC 25391 / DSM 10237 / CIP 104748 / NCIMB 11846 / Nb-255).